A 321-amino-acid polypeptide reads, in one-letter code: Glycolipid transfer protein domain-containing protein 2 (321 aa).

It belongs to the GLTP family.

The polypeptide is Glycolipid transfer protein domain-containing protein 2 (Gltpd2) (Mus musculus (Mouse)).